The following is a 658-amino-acid chain: MAELQTGKPTPLGASFDGNGVNFALFSADAERVELCVFDERQQEQRIVLTARSGDIWHGYLPDAQPGLRYGFRVDGPFEPSQGLRFNPHKLLLDPCARQLDGWVVDDASLQGGIDQRDERDSAEIMAKCVVTAEDYDWQDDQHPQTPWNQTVIYEAHVRGLTQLHPDIPEDIRGSYAALGHPVMIDYLTSLGITALELLPVQQHADEPRLQQIGLRNYWGYNVLLPFAVDNSLAAGDDALNEFRDAVKALHNAGIEVILDVVFNHSAELDVEGPTLCQRGIDNRSYYWLGDSGEYHNWTGCGNVLRLNHPAVMDWVMDCLRFWREVCHVDGFRFDLATVLGRTPDFTAAAPLLSAMKNDNRLQGCKLIAEPWDIGHGGYQLGQFPTPFAEWSDRYRDDMRRFWLHGDISLGAFARRFAASSDIFQQRDRLPYASINKLTAHDGFTLRDLVSFNHKHNDANGEGNRDGTDSNFSNNHGTEGLEADDDIHQRRQASQKALLTTLILSQGTPMLLAGDELGHSQQGNNNAYCQDNELTWLHWDHADRGLREFVAGLIQLRRTIPALQQETWWQEGDGAVQWLNREGQPLTPPQWEQGEHQLQILLSGRWLVLVNASLHAGAFMLPEGHWQVSPPFDETNPPEGGMWHGQAQAVCVLIKQTA.

The active-site Nucleophile is the D335. The active-site Proton donor is the E370. Over residues N457–T468 the composition is skewed to basic and acidic residues. Positions N457 to L481 are disordered.

Belongs to the glycosyl hydrolase 13 family.

It carries out the reaction Hydrolysis of (1-&gt;6)-alpha-D-glucosidic linkages to branches with degrees of polymerization of three or four glucose residues in limit dextrin.. Its pathway is glycan degradation; glycogen degradation. Functionally, removes maltotriose and maltotetraose chains that are attached by 1,6-alpha-linkage to the limit dextrin main chain, generating a debranched limit dextrin. The sequence is that of Glycogen debranching enzyme from Pectobacterium atrosepticum (strain SCRI 1043 / ATCC BAA-672) (Erwinia carotovora subsp. atroseptica).